The chain runs to 156 residues: MNINATLIGQTIAFIVFVWFCMKFVWPPIIKAIEERQKKIADGLNAGERAQKDLEKAQQEIAEQLKEAKQQAAEIIEQSKKRGAKIVEEETQRGHEEREKIVAAGHEEVAAERNRVREELRKQVAVLAVSGAQKIIEREIDKDAHSDIVEKLVAEL.

The chain crosses the membrane as a helical span at residues 7–27 (LIGQTIAFIVFVWFCMKFVWP).

The protein belongs to the ATPase B chain family. As to quaternary structure, F-type ATPases have 2 components, F(1) - the catalytic core - and F(0) - the membrane proton channel. F(1) has five subunits: alpha(3), beta(3), gamma(1), delta(1), epsilon(1). F(0) has three main subunits: a(1), b(2) and c(10-14). The alpha and beta chains form an alternating ring which encloses part of the gamma chain. F(1) is attached to F(0) by a central stalk formed by the gamma and epsilon chains, while a peripheral stalk is formed by the delta and b chains.

It localises to the cell inner membrane. F(1)F(0) ATP synthase produces ATP from ADP in the presence of a proton or sodium gradient. F-type ATPases consist of two structural domains, F(1) containing the extramembraneous catalytic core and F(0) containing the membrane proton channel, linked together by a central stalk and a peripheral stalk. During catalysis, ATP synthesis in the catalytic domain of F(1) is coupled via a rotary mechanism of the central stalk subunits to proton translocation. In terms of biological role, component of the F(0) channel, it forms part of the peripheral stalk, linking F(1) to F(0). The polypeptide is ATP synthase subunit b (Idiomarina loihiensis (strain ATCC BAA-735 / DSM 15497 / L2-TR)).